Consider the following 348-residue polypeptide: Spore development regulator vosA (348 aa).

In terms of domain architecture, Velvet spans 46 to 244 (ALSPSSCFLS…SDQGVRLRLR (199 aa)). Residues 250 to 294 (MMSNKRSISGSGDLTSDQSQQQQQQQPLAKKRREDSVESANPSSL) form a disordered region. Over residues 253–266 (NKRSISGSGDLTSD) the composition is skewed to polar residues. The Nuclear localization signal signature appears at 274–280 (QQPLAKK).

This sequence belongs to the velvet family. VosA subfamily. In terms of assembly, forms a heterodimeric complex with VEL2; the formation of the VEL2-VOS1 complex is light-dependent.

The protein resides in the nucleus. Component of the velB-VosA heterodimeric complex that plays a dual role in activating genes associated with spore maturation and repressing certain development-associated genes. The complex binds DNA through the DNA-binding domain of vosA that recognizes an 11-nucleotide consensus sequence 5'-CTGGCCGCGGC-3' consisting of two motifs in the promoters of key developmental regulatory genes. Regulates spore viability, trehalose accumulation, and tolerance to thermal and oxidative as well as ion stresses. Positively regulates conidial pigmentation and pathogenicity on barley. This Cochliobolus sativus (strain ND90Pr / ATCC 201652) (Common root rot and spot blotch fungus) protein is Spore development regulator vosA.